A 413-amino-acid polypeptide reads, in one-letter code: Chloramphenicol efflux pump MT0201 (413 aa).

Helical transmembrane passes span 23–43 (LSVL…PVGA), 55–75 (VVLV…TTVP), 89–109 (LVVS…APNF), 110–130 (AVLA…WAVI), 150–170 (IYIG…AMSL), 176–196 (LAAV…RLAL), 226–246 (VLTM…VVII), 256–276 (NLAW…PLVA), 286–306 (AVIV…ALAF), 312–332 (AATA…ATAV), 353–373 (GLYV…GGLL), and 378–398 (LAMM…GMTV).

This sequence belongs to the major facilitator superfamily.

Its subcellular location is the cell membrane. In terms of biological role, active efflux pump that plays an important role in chloramphenicol resistance. This Mycobacterium tuberculosis (strain CDC 1551 / Oshkosh) protein is Chloramphenicol efflux pump MT0201.